Here is a 563-residue protein sequence, read N- to C-terminus: Cysteine--tRNA ligase, chloroplastic/mitochondrial (563 aa).

C91 serves as a coordination point for Zn(2+). Residue G92 coordinates L-cysteine. Residues 93-103 (VTAYDLSHIGH) carry the 'HIGH' region motif. T131 contributes to the L-cysteine binding site. The short motif at 136-139 (KIIA) is the 'KIIK' region element. Zn(2+) is bound by residues C271, H296, and E300. Position 296 (H296) interacts with L-cysteine. The short motif at 328 to 332 (KMSKS) is the 'KMSKS' region element. K331 is an ATP binding site.

Belongs to the class-I aminoacyl-tRNA synthetase family. The cofactor is Zn(2+).

It localises to the plastid. The protein resides in the chloroplast. Its subcellular location is the mitochondrion. It catalyses the reaction tRNA(Cys) + L-cysteine + ATP = L-cysteinyl-tRNA(Cys) + AMP + diphosphate. Its function is as follows. Required for female gametophyte development. Is necessary for the fusion of central cell nuclei and programmed cell death (PCD) of the antipodals. In Arabidopsis thaliana (Mouse-ear cress), this protein is Cysteine--tRNA ligase, chloroplastic/mitochondrial.